We begin with the raw amino-acid sequence, 385 residues long: Probable tRNA sulfurtransferase (385 aa).

The region spanning 57-160 is the THUMP domain; the sequence is DGVIERVKKV…RGNAYVFTDK (104 aa). ATP contacts are provided by residues 180 to 181, 205 to 206, Arg-262, Gly-284, and Gln-293; these read ML and YY.

This sequence belongs to the ThiI family.

It localises to the cytoplasm. It catalyses the reaction [ThiI sulfur-carrier protein]-S-sulfanyl-L-cysteine + a uridine in tRNA + 2 reduced [2Fe-2S]-[ferredoxin] + ATP + H(+) = [ThiI sulfur-carrier protein]-L-cysteine + a 4-thiouridine in tRNA + 2 oxidized [2Fe-2S]-[ferredoxin] + AMP + diphosphate. The enzyme catalyses [ThiS sulfur-carrier protein]-C-terminal Gly-Gly-AMP + S-sulfanyl-L-cysteinyl-[cysteine desulfurase] + AH2 = [ThiS sulfur-carrier protein]-C-terminal-Gly-aminoethanethioate + L-cysteinyl-[cysteine desulfurase] + A + AMP + 2 H(+). It functions in the pathway cofactor biosynthesis; thiamine diphosphate biosynthesis. Catalyzes the ATP-dependent transfer of a sulfur to tRNA to produce 4-thiouridine in position 8 of tRNAs, which functions as a near-UV photosensor. Also catalyzes the transfer of sulfur to the sulfur carrier protein ThiS, forming ThiS-thiocarboxylate. This is a step in the synthesis of thiazole, in the thiamine biosynthesis pathway. The sulfur is donated as persulfide by IscS. In Clostridium perfringens (strain 13 / Type A), this protein is Probable tRNA sulfurtransferase.